The primary structure comprises 183 residues: NAD(P)H-quinone oxidoreductase subunit I, chloroplastic (183 aa).

4Fe-4S ferredoxin-type domains follow at residues 55–84 and 95–124; these read GRIHFEFDKCIACEVCVRVCPINLPVVDWE and KNYSIDFGVCIFCGNCVEYCPTNCLSMTEE. The [4Fe-4S] cluster site is built by Cys64, Cys67, Cys70, Cys74, Cys104, Cys107, Cys110, and Cys114.

Belongs to the complex I 23 kDa subunit family. As to quaternary structure, NDH is composed of at least 16 different subunits, 5 of which are encoded in the nucleus. Requires [4Fe-4S] cluster as cofactor.

It is found in the plastid. The protein localises to the chloroplast thylakoid membrane. It catalyses the reaction a plastoquinone + NADH + (n+1) H(+)(in) = a plastoquinol + NAD(+) + n H(+)(out). The catalysed reaction is a plastoquinone + NADPH + (n+1) H(+)(in) = a plastoquinol + NADP(+) + n H(+)(out). Its function is as follows. NDH shuttles electrons from NAD(P)H:plastoquinone, via FMN and iron-sulfur (Fe-S) centers, to quinones in the photosynthetic chain and possibly in a chloroplast respiratory chain. The immediate electron acceptor for the enzyme in this species is believed to be plastoquinone. Couples the redox reaction to proton translocation, and thus conserves the redox energy in a proton gradient. This Marchantia polymorpha (Common liverwort) protein is NAD(P)H-quinone oxidoreductase subunit I, chloroplastic.